Here is a 414-residue protein sequence, read N- to C-terminus: Gamma-glutamyl phosphate reductase (414 aa).

Belongs to the gamma-glutamyl phosphate reductase family.

Its subcellular location is the cytoplasm. The enzyme catalyses L-glutamate 5-semialdehyde + phosphate + NADP(+) = L-glutamyl 5-phosphate + NADPH + H(+). It participates in amino-acid biosynthesis; L-proline biosynthesis; L-glutamate 5-semialdehyde from L-glutamate: step 2/2. Catalyzes the NADPH-dependent reduction of L-glutamate 5-phosphate into L-glutamate 5-semialdehyde and phosphate. The product spontaneously undergoes cyclization to form 1-pyrroline-5-carboxylate. This Thermoanaerobacter sp. (strain X514) protein is Gamma-glutamyl phosphate reductase.